The following is a 396-amino-acid chain: Elongation factor Tu 1 (396 aa).

The region spanning 10-206 (KPHCNIGTIG…AVDAYIPQPE (197 aa)) is the tr-type G domain. The tract at residues 19-26 (GHVDHGKT) is G1. 19–26 (GHVDHGKT) lines the GTP pocket. Residue Thr26 participates in Mg(2+) binding. Positions 60-64 (GITIS) are G2. The G3 stretch occupies residues 81–84 (DCPG). GTP contacts are provided by residues 81 to 85 (DCPGH) and 136 to 139 (NKCD). Residues 136 to 139 (NKCD) form a G4 region. Positions 174–176 (SAL) are G5.

This sequence belongs to the TRAFAC class translation factor GTPase superfamily. Classic translation factor GTPase family. EF-Tu/EF-1A subfamily. In terms of assembly, monomer.

It is found in the cytoplasm. It carries out the reaction GTP + H2O = GDP + phosphate + H(+). In terms of biological role, GTP hydrolase that promotes the GTP-dependent binding of aminoacyl-tRNA to the A-site of ribosomes during protein biosynthesis. This is Elongation factor Tu 1 from Rhodopseudomonas palustris (strain BisB5).